A 95-amino-acid chain; its full sequence is Sec-independent protein translocase protein TatA (95 aa).

The helical transmembrane segment at 1–21 (MGGISIWQLLIIALIVVLLFG) threads the bilayer. Positions 50–61 (KALEDNAADKPA) are enriched in basic and acidic residues. Residues 50–95 (KALEDNAADKPAADAAKVTETAKVAETAPVAETAEKKAESKGKEQA) are disordered. Low complexity predominate over residues 62 to 81 (ADAAKVTETAKVAETAPVAE). The segment covering 82–95 (TAEKKAESKGKEQA) has biased composition (basic and acidic residues).

Belongs to the TatA/E family. In terms of assembly, the Tat system comprises two distinct complexes: a TatABC complex, containing multiple copies of TatA, TatB and TatC subunits, and a separate TatA complex, containing only TatA subunits. Substrates initially bind to the TatABC complex, which probably triggers association of the separate TatA complex to form the active translocon.

The protein resides in the cell inner membrane. Part of the twin-arginine translocation (Tat) system that transports large folded proteins containing a characteristic twin-arginine motif in their signal peptide across membranes. TatA could form the protein-conducting channel of the Tat system. In Shewanella halifaxensis (strain HAW-EB4), this protein is Sec-independent protein translocase protein TatA.